The following is an 82-amino-acid chain: ATP synthase subunit c, chloroplastic (82 aa).

Transmembrane regions (helical) follow at residues 3–23 and 57–77; these read PLIA…AAIG and FAFM…LLFA.

Belongs to the ATPase C chain family. F-type ATPases have 2 components, F(1) - the catalytic core - and F(0) - the membrane proton channel. F(1) has five subunits: alpha(3), beta(3), gamma(1), delta(1), epsilon(1). F(0) has four main subunits: a(1), b(1), b'(1) and c(10-14). The alpha and beta chains form an alternating ring which encloses part of the gamma chain. F(1) is attached to F(0) by a central stalk formed by the gamma and epsilon chains, while a peripheral stalk is formed by the delta, b and b' chains.

It is found in the plastid. The protein resides in the chloroplast thylakoid membrane. F(1)F(0) ATP synthase produces ATP from ADP in the presence of a proton or sodium gradient. F-type ATPases consist of two structural domains, F(1) containing the extramembraneous catalytic core and F(0) containing the membrane proton channel, linked together by a central stalk and a peripheral stalk. During catalysis, ATP synthesis in the catalytic domain of F(1) is coupled via a rotary mechanism of the central stalk subunits to proton translocation. In terms of biological role, key component of the F(0) channel; it plays a direct role in translocation across the membrane. A homomeric c-ring of between 10-14 subunits forms the central stalk rotor element with the F(1) delta and epsilon subunits. The sequence is that of ATP synthase subunit c, chloroplastic from Oltmannsiellopsis viridis (Marine flagellate).